Reading from the N-terminus, the 255-residue chain is L-seryl-tRNA(Sec) kinase (255 aa).

Residue 7-14 (GLPSVGKS) coordinates ATP.

The protein belongs to the L-seryl-tRNA(Sec) kinase family.

The catalysed reaction is L-seryl-tRNA(Sec) + ATP = O-phospho-L-seryl-tRNA(Sec) + ADP. Its pathway is aminoacyl-tRNA biosynthesis; selenocysteinyl-tRNA(Sec) biosynthesis; selenocysteinyl-tRNA(Sec) from L-seryl-tRNA(Sec) (archaeal/eukaryal route): step 1/2. Specifically phosphorylates seryl-tRNA(Sec) to O-phosphoseryl-tRNA(Sec), an activated intermediate for selenocysteine biosynthesis. This Methanococcus maripaludis (strain DSM 14266 / JCM 13030 / NBRC 101832 / S2 / LL) protein is L-seryl-tRNA(Sec) kinase (pstK).